A 292-amino-acid polypeptide reads, in one-letter code: MKILVPATSANLGPGFDCLGLSLKLFNETQIQKSGVFSISIGGEGSDNIFLKKNNIFVNIFYEIYEKLSGKKDNFRFIFQNNIPLSRGLGSSSAVIVGAIASAYYMSGFKVEKKRILDEALIYENHPDNIAPATLGGFVCSLVEKNKVYSIKKEIDKDLAAVVVIPNLAMSTEQSRQALAKNLSFNDAVFNLSHASFLTACFLEKKYEFLKFASQDKLHEINRMKNLPELFEVQKFALENKALMSTLSGSGSSFFSLAFKDDALALAKKMQTKFKDFSVQYLEFDDNGFEIC.

84 to 94 (PLSRGLGSSSA) serves as a coordination point for ATP.

The protein belongs to the GHMP kinase family. Homoserine kinase subfamily.

The protein resides in the cytoplasm. It catalyses the reaction L-homoserine + ATP = O-phospho-L-homoserine + ADP + H(+). It participates in amino-acid biosynthesis; L-threonine biosynthesis; L-threonine from L-aspartate: step 4/5. Catalyzes the ATP-dependent phosphorylation of L-homoserine to L-homoserine phosphate. In Campylobacter jejuni subsp. doylei (strain ATCC BAA-1458 / RM4099 / 269.97), this protein is Homoserine kinase.